We begin with the raw amino-acid sequence, 159 residues long: Ribosome maturation factor RimP (159 aa).

Belongs to the RimP family.

The protein localises to the cytoplasm. Required for maturation of 30S ribosomal subunits. This chain is Ribosome maturation factor RimP, found in Geotalea uraniireducens (strain Rf4) (Geobacter uraniireducens).